A 65-amino-acid polypeptide reads, in one-letter code: Large ribosomal subunit protein bL35 (65 aa).

The segment covering methionine 1–threonine 15 has biased composition (basic residues). The disordered stretch occupies residues methionine 1–alanine 27.

Belongs to the bacterial ribosomal protein bL35 family.

This Cupriavidus pinatubonensis (strain JMP 134 / LMG 1197) (Cupriavidus necator (strain JMP 134)) protein is Large ribosomal subunit protein bL35.